An 89-amino-acid chain; its full sequence is Large ribosomal subunit protein bL27 (89 aa).

A disordered region spans residues 1–22 (MAHKKAGGSSRNGRDSESKRLG).

The protein belongs to the bacterial ribosomal protein bL27 family.

The protein is Large ribosomal subunit protein bL27 of Brucella abortus (strain S19).